The primary structure comprises 419 residues: MAGTFGRLLAGRVTAALFAAAGSGVLTTGYLLNQQNVKATVHEKRKLFPPSADYPDLRKHNNCMAECLTPAIYAKLRDKLTPNGYSLDQCIQTGVDNPGHPFIKTVGMVAGDEESYEVFAEIFDPVIKARHNGYDPRTMKHHTDLDASKITHGQFDERYVLSSRVRTGRSIRGLSLPPACSRAERREVENVVVTALAGLKGDLSGKYYSLTNMSERDQQQLIDDHFLFDKPVSPLLTCAGMARDWPDARGIWHNNDKTFLVWINEEDHTRVISMEKGGNMKRVFERFCRGLKEVERLIKERGWEFMWNERLGYVLTCPSNLGTGLRAGVHVKLPRLSKDPRFPKILENLRLQKRGTGGVDTAAVADVYDISNLDRMGRSEVELVQIVIDGVNYLVDCEKKLEKGQDIKVPPPLPQFGRK.

The N-terminal 39 residues, 1–39 (MAGTFGRLLAGRVTAALFAAAGSGVLTTGYLLNQQNVKA), are a transit peptide targeting the mitochondrion. One can recognise a Phosphagen kinase N-terminal domain in the interval 46 to 132 (KLFPPSADYP…FDPVIKARHN (87 aa)). Positions 159 to 401 (YVLSSRVRTG…NYLVDCEKKL (243 aa)) constitute a Phosphagen kinase C-terminal domain. ATP is bound by residues 162-166 (SSRVR), His-225, Arg-270, Arg-326, 354-359 (RGTGGV), and Asp-369.

This sequence belongs to the ATP:guanido phosphotransferase family. Exists as an octamer composed of four MTCK homodimers. Expressed in the leg muscle and heart.

The protein localises to the mitochondrion inner membrane. It catalyses the reaction creatine + ATP = N-phosphocreatine + ADP + H(+). Reversibly catalyzes the transfer of phosphate between ATP and various phosphogens (e.g. creatine phosphate). Creatine kinase isoenzymes play a central role in energy transduction in tissues with large, fluctuating energy demands, such as skeletal muscle, heart, brain and spermatozoa. The polypeptide is Creatine kinase S-type, mitochondrial (CKMT2) (Gallus gallus (Chicken)).